The sequence spans 76 residues: UPF0235 protein MRA_1997 (76 aa).

The protein belongs to the UPF0235 family.

The chain is UPF0235 protein MRA_1997 from Mycobacterium tuberculosis (strain ATCC 25177 / H37Ra).